A 309-amino-acid polypeptide reads, in one-letter code: MSAEGVEKLSLEIAASEEESVAPTEQQDVACGLENLPVSLWPLGAEPRPKPFQYTPDHVAGPGADIDPTQITFPGCACIETPCVPGTCSCLRHENNYDDNLCLRDVGSEGKYAKPVFECNVLCQCGMRCRNRVVQNGLHFLLQVFQTEKKGWGLRTLEFIPKGRFVCEYAGEVLGFSEVQRRIHLQTSHDSNYIIAVREHIYSGQIMETFVDPTYIGNIGRFLNHSCEPNLLMIPVRIDSMVPKLALFAAKDILPGEELSYDYSGRFLNQVSSKDKEKIDCSPPRKPCYCGAQSCTTFLPYDSSLYMAP.

The Pre-SET domain occupies 74-137; sequence PGCACIETPC…RCRNRVVQNG (64 aa). Residues Cys76, Cys78, Cys83, Cys88, Cys90, Cys119, Cys123, Cys125, and Cys129 each coordinate Zn(2+). The SET domain occupies 140 to 264; the sequence is FLLQVFQTEK…PGEELSYDYS (125 aa). S-adenosyl-L-methionine contacts are provided by residues 150-152, Tyr193, Arg221, and 224-225; these read KGW and NH. Residues Cys227, Cys288, Cys290, and Cys295 each coordinate Zn(2+). The region spanning 284-300 is the Post-SET domain; it reads PRKPCYCGAQSCTTFLP.

Belongs to the class V-like SAM-binding methyltransferase superfamily.

It localises to the nucleus. The protein localises to the chromosome. It catalyses the reaction L-lysyl(36)-[histone H3] + 2 S-adenosyl-L-methionine = N(6),N(6)-dimethyl-L-lysyl(36)-[histone H3] + 2 S-adenosyl-L-homocysteine + 2 H(+). Its function is as follows. Histone methyltransferase that methylates 'Lys-4' and 'Lys-36' of histone H3, 2 specific tags for epigenetic transcriptional activation. Specifically mediates dimethylation of H3 'Lys-36'. The sequence is that of Histone-lysine N-methyltransferase SETMAR from Mus musculus (Mouse).